A 204-amino-acid chain; its full sequence is LexA repressor (204 aa).

Positions 31-51 form a DNA-binding region, H-T-H motif; it reads VREIGQAVGLKSSSTVHTHLV. Catalysis depends on for autocatalytic cleavage activity residues S128 and K165.

The protein belongs to the peptidase S24 family. As to quaternary structure, homodimer.

It catalyses the reaction Hydrolysis of Ala-|-Gly bond in repressor LexA.. Represses a number of genes involved in the response to DNA damage (SOS response), including recA and lexA. In the presence of single-stranded DNA, RecA interacts with LexA causing an autocatalytic cleavage which disrupts the DNA-binding part of LexA, leading to derepression of the SOS regulon and eventually DNA repair. This chain is LexA repressor, found in Syntrophomonas wolfei subsp. wolfei (strain DSM 2245B / Goettingen).